Here is a 154-residue protein sequence, read N- to C-terminus: MKIYEGKLLAQGLRFGIVVSRFNDFIGERLLGGALDALKRSGAEEKNIDVFKVPGAFEIPLVAKKAASTGRYDAVICLGAVIRGATPHFDYVANEVSKGIAHAGLEAGVPISFGVLTTDTIEQAIERAGSKSGNKGWDAAVAAIEMANLIKQMS.

5-amino-6-(D-ribitylamino)uracil contacts are provided by residues F22, 56 to 58, and 80 to 82; these read AFE and AVI. 85 to 86 is a binding site for (2S)-2-hydroxy-3-oxobutyl phosphate; sequence AT. The active-site Proton donor is the H88. Position 113 (F113) interacts with 5-amino-6-(D-ribitylamino)uracil. R127 lines the (2S)-2-hydroxy-3-oxobutyl phosphate pocket.

Belongs to the DMRL synthase family.

It catalyses the reaction (2S)-2-hydroxy-3-oxobutyl phosphate + 5-amino-6-(D-ribitylamino)uracil = 6,7-dimethyl-8-(1-D-ribityl)lumazine + phosphate + 2 H2O + H(+). The protein operates within cofactor biosynthesis; riboflavin biosynthesis; riboflavin from 2-hydroxy-3-oxobutyl phosphate and 5-amino-6-(D-ribitylamino)uracil: step 1/2. Its function is as follows. Catalyzes the formation of 6,7-dimethyl-8-ribityllumazine by condensation of 5-amino-6-(D-ribitylamino)uracil with 3,4-dihydroxy-2-butanone 4-phosphate. This is the penultimate step in the biosynthesis of riboflavin. The protein is 6,7-dimethyl-8-ribityllumazine synthase of Syntrophobacter fumaroxidans (strain DSM 10017 / MPOB).